Reading from the N-terminus, the 161-residue chain is Allophycocyanin beta chain (161 aa).

N4-methylasparagine is present on Asn-71. Residue Cys-81 coordinates (2R,3E)-phycocyanobilin.

This sequence belongs to the phycobiliprotein family. As to quaternary structure, heterodimer of an alpha and a beta chain. In terms of processing, contains one covalently linked phycocyanobilin chromophore.

Its subcellular location is the plastid. The protein localises to the chloroplast thylakoid membrane. In terms of biological role, light-harvesting photosynthetic bile pigment-protein from the phycobiliprotein complex. Allophycocyanin has a maximum absorption at approximately 650 nanometers. The polypeptide is Allophycocyanin beta chain (apcB) (Porphyra purpurea (Red seaweed)).